A 1377-amino-acid chain; its full sequence is MDTSSVGGLELTDQTPVLLGSTAMATSLTNVGNSFSGPANPLVSRSNKFQNSSVEDDDDVVFIEPVQPPPPSVPVVADQRTITFTSSKNEELQGNDSKITPSSKELASQKGSVSETIVIDDEEDMETNQGQEKNSSNFIERRPPETKNRTNDVDFSTSSFSRSKVNAGMGNSGITTEPDSEIQIANVTTLETGVSSVNDGQLENTDGRDMNLMITHVTSLQNTNLGDVSNGLQSSNFGVNIQTYTPSLTSQTKTGVGPFNPGRMNVAGDVFQNGESATHHNPDSWISQSASFPRNQKQPGVDSLSPVASLPKQIFQPSVQQQPTKPVKVTCANCKKPLQKGQTAYQRKGSAHLFCSTTCLSSFSHKPAPKKLCVMCKKDITTMKGTIVAQVDSSESFQEFCSTSCLSLYEDKQNPTKGALNKSRCTICGKLTEIRHEVSFKNMTHKLCSDHCFNRYRMANGLIMNCCEQCGEYLPSKGAGNNVLVIDGQQKRFCCQSCVSEYKQVGSHPSFLKEVRDHMQDSFLMQPEKYGKLTTCTGCRTQCRFFDMTQCIGPNGYMEPYCSTACMNSHKTKYAKSQSLGIICHFCKRNSLPQYQATMPDGKLYNFCNSSCVAKFQALSMQSSPNGQFVAPSDIQLKCNYCKNSFCSKPEILEWENKVHQFCSKTCSDDYKKLHCIVTYCEYCQEEKTLHETVNFSGVKRPFCSEGCKLLYKQDFARRLGLRCVTCNYCSQLCKKGATKELDGVVRDFCSEDCCKKFQDWYYKAARCDCCKSQGTLKERVQWRGEMKHFCDQHCLLRFYCQQNEPNMTTQKGPENLHYDQGCQTSRTKMTGSAPPPSPTPNKEMKNKAVLCKPLTMTKATYCKPHMQTKSCQTDDTWRTEYVPVPIPVPVYIPVPMHMYSQNIPVPTTVPVPVPVPVFLPAPLDSSEKIPAAIEELKSKVSSDALDTELLTMTDMMSEDEGKTETTNINSVIIETDIIGSDLLKNSDPETQSSMPDVPYEPDLDIEIDFPRAAEELDMENEFLLPPVFGEEYEEQPRPRSKKKGAKRKAVSGYQSHDDSSDNSECSFPFKYTYGVNAWKHWVKTRQLDEDLLVLDELKSSKSVKLKEDLLSHTTAELNYGLAHFVNEIRRPNGENYAPDSIYYLCLGIQEYLCGSNRKDNIFIDPGYQTFEQELNKILRSWQPSILPDGSIFSRVEEDYLWRIKQLGSHSPVALLNTLFYFNTKYFGLKTVEQHLRLSFGTVFRHWKKNPLTMENKACLRYQVSSLCGTDNEDKITTGKRKHEDDEPVFEQIENTANPSRCPVKMFECYLSKSPQNLNQRMDVFYLQPECSSSTDSPVWYTSTSLDRNTLENMLVRVLLVKDIYDKDNYELDEDTD.

Residues K48, K88, K98, and K104 each participate in a glycyl lysine isopeptide (Lys-Gly) (interchain with G-Cter in SUMO2) cross-link. 2 stretches are compositionally biased toward polar residues: residues 85 to 115 and 127 to 138; these read TSSKNEELQGNDSKITPSSKELASQKGSVSE and TNQGQEKNSSNF. The tract at residues 85 to 177 is disordered; sequence TSSKNEELQG…GMGNSGITTE (93 aa). Positions 139-152 are enriched in basic and acidic residues; sequence IERRPPETKNRTND. K147 participates in a covalent cross-link: Glycyl lysine isopeptide (Lys-Gly) (interchain with G-Cter in SUMO2). Residues 153–164 show a composition bias toward polar residues; that stretch reads VDFSTSSFSRSK. S159 is subject to Phosphoserine. Glycyl lysine isopeptide (Lys-Gly) (interchain with G-Cter in SUMO2) cross-links involve residues K253 and K297. The tract at residues 273–305 is disordered; it reads NGESATHHNPDSWISQSASFPRNQKQPGVDSLS. Polar residues predominate over residues 284-298; the sequence is SWISQSASFPRNQKQ. Position 305 is a phosphoserine (S305). Glycyl lysine isopeptide (Lys-Gly) (interchain with G-Cter in SUMO2) cross-links involve residues K312, K325, K348, and K366. The MYM-type 1 zinc-finger motif lies at 327 to 363; sequence VKVTCANCKKPLQKGQTAYQRKGSAHLFCSTTCLSSF. The segment at 369–409 adopts an MYM-type 2 zinc-finger fold; the sequence is PKKLCVMCKKDITTMKGTIVAQVDSSESFQEFCSTSCLSLY. Residues K417, K441, K491, K503, K513, K529, and K532 each participate in a glycyl lysine isopeptide (Lys-Gly) (interchain with G-Cter in SUMO2) cross-link. 2 MYM-type zinc fingers span residues 421–456 and 463–502; these read NKSRCTICGKLTEIRHEVSFKNMTHKLCSDHCFNRY and IMNCCEQCGEYLPSKGAGNNVLVIDGQQKRFCCQSCVSEY. Residues 533–570 form an MYM-type 5 zinc finger; that stretch reads LTTCTGCRTQCRFFDMTQCIGPNGYMEPYCSTACMNSH. Glycyl lysine isopeptide (Lys-Gly) (interchain with G-Cter in SUMO2) cross-links involve residues K576, K603, K649, K658, K688, K700, and K709. The segment at 636 to 671 adopts an MYM-type 6 zinc-finger fold; sequence QLKCNYCKNSFCSKPEILEWENKVHQFCSKTCSDDY. 2 MYM-type zinc fingers span residues 723-758 and 764-799; these read RCVTCNYCSQLCKKGATKELDGVVRDFCSEDCCKKF and KAARCDCCKSQGTLKERVQWRGEMKHFCDQHCLLRF. Residues K764, K788, K812, and K829 each participate in a glycyl lysine isopeptide (Lys-Gly) (interchain with G-Cter in SUMO2) cross-link. Residues S838 and S958 each carry the phosphoserine modification. Disordered stretches follow at residues 983 to 1002 and 1028 to 1064; these read LLKNSDPETQSSMPDVPYEP and VFGEEYEEQPRPRSKKKGAKRKAVSGYQSHDDSSDNS. Over residues 1039–1050 the composition is skewed to basic residues; the sequence is PRSKKKGAKRKA. At S1064 the chain carries Phosphoserine. Phosphothreonine is present on T1376.

As to quaternary structure, can form homodimers. May be a component of a BHC histone deacetylase complex that contains HDAC1, HDAC2, HMG20B/BRAF35, KDM1A, RCOR1/CoREST, PHF21A/BHC80, ZMYM2, ZNF217, ZMYM3, GSE1 and GTF2I. Interacts with FOXP1 and FOXP2.

The protein localises to the nucleus. Functionally, involved in the negative regulation of transcription. In Homo sapiens (Human), this protein is Zinc finger MYM-type protein 2 (ZMYM2).